We begin with the raw amino-acid sequence, 420 residues long: Glucose-1-phosphate adenylyltransferase (420 aa).

Alpha-D-glucose 1-phosphate-binding positions include Tyr97, Gly162, 177–178, and Ser188; that span reads EK.

The protein belongs to the bacterial/plant glucose-1-phosphate adenylyltransferase family. As to quaternary structure, homotetramer.

The enzyme catalyses alpha-D-glucose 1-phosphate + ATP + H(+) = ADP-alpha-D-glucose + diphosphate. Its pathway is glycan biosynthesis; glycogen biosynthesis. In terms of biological role, involved in the biosynthesis of ADP-glucose, a building block required for the elongation reactions to produce glycogen. Catalyzes the reaction between ATP and alpha-D-glucose 1-phosphate (G1P) to produce pyrophosphate and ADP-Glc. The chain is Glucose-1-phosphate adenylyltransferase from Pseudothermotoga lettingae (strain ATCC BAA-301 / DSM 14385 / NBRC 107922 / TMO) (Thermotoga lettingae).